The primary structure comprises 152 residues: Methylglyoxal synthase (152 aa).

Residues 6 to 152 (RKISARKSIA…YDGYLAERLA (147 aa)) form the MGS-like domain. Residues histidine 19, lysine 23, 45 to 48 (TGTT), and 65 to 66 (SG) each bind substrate. Aspartate 71 serves as the catalytic Proton donor/acceptor. Histidine 98 serves as a coordination point for substrate.

This sequence belongs to the methylglyoxal synthase family.

It carries out the reaction dihydroxyacetone phosphate = methylglyoxal + phosphate. Functionally, catalyzes the formation of methylglyoxal from dihydroxyacetone phosphate. In Actinobacillus pleuropneumoniae serotype 3 (strain JL03), this protein is Methylglyoxal synthase.